Reading from the N-terminus, the 434-residue chain is 3-phosphoshikimate 1-carboxyvinyltransferase (434 aa).

Residues K22, S23, and R27 each contribute to the 3-phosphoshikimate site. Position 22 (K22) interacts with phosphoenolpyruvate. Residues G93 and R121 each contribute to the phosphoenolpyruvate site. 3-phosphoshikimate is bound by residues S168, S169, Q170, S199, D320, and K347. A phosphoenolpyruvate-binding site is contributed by Q170. Residue D320 is the Proton acceptor of the active site. Phosphoenolpyruvate-binding residues include R351, R394, and K419.

The protein belongs to the EPSP synthase family. Monomer.

The protein resides in the cytoplasm. The enzyme catalyses 3-phosphoshikimate + phosphoenolpyruvate = 5-O-(1-carboxyvinyl)-3-phosphoshikimate + phosphate. The protein operates within metabolic intermediate biosynthesis; chorismate biosynthesis; chorismate from D-erythrose 4-phosphate and phosphoenolpyruvate: step 6/7. In terms of biological role, catalyzes the transfer of the enolpyruvyl moiety of phosphoenolpyruvate (PEP) to the 5-hydroxyl of shikimate-3-phosphate (S3P) to produce enolpyruvyl shikimate-3-phosphate and inorganic phosphate. The polypeptide is 3-phosphoshikimate 1-carboxyvinyltransferase (Burkholderia cenocepacia (strain HI2424)).